A 326-amino-acid chain; its full sequence is F-box/LRR-repeat protein 12 (326 aa).

The region spanning 1-47 (MATLFDLPDLVLLEIFSYLPVRDRIRISRVCHRWKRLVDDRWLWRHV) is the F-box domain. LRR repeat units lie at residues 51 to 78 (LYTM…RMGG), 86 to 111 (APQL…CLHV), 113 to 133 (DLSM…ELHS), 161 to 185 (VPAF…VLGG), 186 to 211 (TYRV…EVLG), 212 to 236 (CTLS…IRLT), 237 to 261 (VGGL…CFQG), and 266 to 291 (PDMP…EVQG).

In terms of assembly, interacts with SKP1 and CUL1.

The protein operates within protein modification; protein ubiquitination. Substrate-recognition component of the SCF (SKP1-CUL1-F-box protein)-type E3 ubiquitin ligase complex. Mediates the polyubiquitination and proteasomal degradation of CAMK1 leading to disruption of cyclin D1/CDK4 complex assembly which results in G1 cell cycle arrest in lung epithelia. The sequence is that of F-box/LRR-repeat protein 12 (Fbxl12) from Mus musculus (Mouse).